The chain runs to 424 residues: D-inositol 3-phosphate glycosyltransferase (424 aa).

Residue H16 participates in 1D-myo-inositol 3-phosphate binding. UDP-N-acetyl-alpha-D-glucosamine contacts are provided by residues 22–23 and G30; that span reads QP. 1D-myo-inositol 3-phosphate-binding positions include 27–32, K85, Y118, T142, and R162; that span reads DAGGMN. UDP-N-acetyl-alpha-D-glucosamine contacts are provided by R240 and K245. The Mg(2+) site is built by M313, R314, and A316. UDP-N-acetyl-alpha-D-glucosamine-binding residues include E326 and E334. T340 contacts Mg(2+).

It belongs to the glycosyltransferase group 1 family. MshA subfamily. As to quaternary structure, homodimer.

It catalyses the reaction 1D-myo-inositol 3-phosphate + UDP-N-acetyl-alpha-D-glucosamine = 1D-myo-inositol 2-acetamido-2-deoxy-alpha-D-glucopyranoside 3-phosphate + UDP + H(+). Functionally, catalyzes the transfer of a N-acetyl-glucosamine moiety to 1D-myo-inositol 3-phosphate to produce 1D-myo-inositol 2-acetamido-2-deoxy-glucopyranoside 3-phosphate in the mycothiol biosynthesis pathway. The chain is D-inositol 3-phosphate glycosyltransferase from Jonesia denitrificans (strain ATCC 14870 / DSM 20603 / BCRC 15368 / CIP 55.134 / JCM 11481 / NBRC 15587 / NCTC 10816 / Prevot 55134) (Listeria denitrificans).